A 431-amino-acid chain; its full sequence is Venom metalloproteinase 1 (431 aa).

The N-terminal stretch at 1-22 (MDLFILTRFILFLSFFMKSIHC) is a signal peptide. N-linked (GlcNAc...) asparagine glycans are attached at residues N64, N113, N148, and N187. In terms of domain architecture, Peptidase M12B spans 228-428 (DLLMKTSRRL…TSAACLKDTY (201 aa)). Cystine bridges form between C340–C423 and C379–C407. H363 is a binding site for Zn(2+). The active site involves E364. Zn(2+) is bound by residues H367 and H373. N-linked (GlcNAc...) asparagine glycosylation occurs at N414.

In the C-terminal section; belongs to the venom metalloproteinase (M12B) family. In terms of assembly, monomer. Zn(2+) is required as a cofactor. In terms of tissue distribution, expressed by the venom gland.

The protein resides in the secreted. Its activity is regulated as follows. The gelatinase activity is inhibited by EDTA. In terms of biological role, the recombinant protein has gelatinase activity. In vivo, injection of this recombinant into fifth instar L.oleracea (host) larvae results in partial insect mortality associated with the molt to sixth instar, with surviving insects showing retarded development and growth. The sequence is that of Venom metalloproteinase 1 from Eulophus pennicornis (Parasitoid wasp).